A 299-amino-acid chain; its full sequence is ATP phosphoribosyltransferase (299 aa).

The protein belongs to the ATP phosphoribosyltransferase family. Long subfamily. Mg(2+) is required as a cofactor.

It localises to the cytoplasm. The catalysed reaction is 1-(5-phospho-beta-D-ribosyl)-ATP + diphosphate = 5-phospho-alpha-D-ribose 1-diphosphate + ATP. It functions in the pathway amino-acid biosynthesis; L-histidine biosynthesis; L-histidine from 5-phospho-alpha-D-ribose 1-diphosphate: step 1/9. Feedback inhibited by histidine. Functionally, catalyzes the condensation of ATP and 5-phosphoribose 1-diphosphate to form N'-(5'-phosphoribosyl)-ATP (PR-ATP). Has a crucial role in the pathway because the rate of histidine biosynthesis seems to be controlled primarily by regulation of HisG enzymatic activity. The chain is ATP phosphoribosyltransferase from Shewanella frigidimarina (strain NCIMB 400).